Here is a 339-residue protein sequence, read N- to C-terminus: MTELFFEYIFPLIIIALKVVAITIPLILCVAYLTYAERRVIGLMQLRRGPNVVGPFGLLQPIADAVKLLFKEPIIPTNSDKILFILAPMITFILSLIGWAVIPFAKGVVLADINVGVLYILAISSLSVYGIIIAGWASNSKYAFLGAIRSSAQMISYEVSMGLVIITVLLTTGTLNLSGIIEAQRTMPWWIDLMLLPMGVVFFISVLAETNRLPFDLPEAESELVAGYNVEYSSMGFALFFLGEYANMILVSAMTTTFFLGGYLPPFNISWLDFIPGFFWFVFKVGFLLFCFLWIRATLPRYRYDQLMRLGWKVFLPLTLFWVVLVSSVLVYTDNLSNV.

9 helical membrane passes run 9-29 (IFPLIIIALKVVAITIPLILC), 50-70 (PNVVGPFGLLQPIADAVKLLF), 82-102 (ILFILAPMITFILSLIGWAVI), 115-135 (VGVLYILAISSLSVYGIIIAG), 161-181 (MGLVIITVLLTTGTLNLSGII), 187-207 (MPWWIDLMLLPMGVVFFISVL), 235-255 (MGFALFFLGEYANMILVSAMT), 275-295 (IPGFFWFVFKVGFLLFCFLWI), and 311-331 (GWKVFLPLTLFWVVLVSSVLV).

The protein belongs to the complex I subunit 1 family. As to quaternary structure, NDH-1 is composed of 14 different subunits. Subunits NuoA, H, J, K, L, M, N constitute the membrane sector of the complex.

The protein resides in the cell inner membrane. It catalyses the reaction a quinone + NADH + 5 H(+)(in) = a quinol + NAD(+) + 4 H(+)(out). Functionally, NDH-1 shuttles electrons from NADH, via FMN and iron-sulfur (Fe-S) centers, to quinones in the respiratory chain. The immediate electron acceptor for the enzyme in this species is believed to be ubiquinone. Couples the redox reaction to proton translocation (for every two electrons transferred, four hydrogen ions are translocated across the cytoplasmic membrane), and thus conserves the redox energy in a proton gradient. This subunit may bind ubiquinone. The polypeptide is NADH-quinone oxidoreductase subunit H (Rickettsia felis (strain ATCC VR-1525 / URRWXCal2) (Rickettsia azadi)).